A 670-amino-acid polypeptide reads, in one-letter code: Beta-lactam-inducible penicillin-binding protein (670 aa).

Residues 4–24 traverse the membrane as a helical segment; sequence IKIVPLILIVVVVGFGIYFYA. A penicillin contacts are provided by Ser-25 and Ser-405. The active-site Acyl-ester intermediate is Ser-405.

It belongs to the transpeptidase family.

It is found in the cell membrane. The polypeptide is Beta-lactam-inducible penicillin-binding protein (pbp) (Staphylococcus aureus).